Consider the following 448-residue polypeptide: Adenylosuccinate synthetase (448 aa).

Residues 22–28 (GDEGKGK) and 50–52 (GHT) each bind GTP. Catalysis depends on Asp-23, which acts as the Proton acceptor. Asp-23 and Gly-50 together coordinate Mg(2+). Residues 23-26 (DEGK), 48-51 (NAGH), Thr-139, Arg-153, Gln-234, Thr-249, and Arg-321 contribute to the IMP site. The Proton donor role is filled by His-51. Residue 317 to 323 (SVTGRPR) participates in substrate binding. GTP contacts are provided by residues Arg-323, 349-351 (KLD), and 431-433 (STG).

The protein belongs to the adenylosuccinate synthetase family. As to quaternary structure, homodimer. Mg(2+) serves as cofactor.

It localises to the cytoplasm. It catalyses the reaction IMP + L-aspartate + GTP = N(6)-(1,2-dicarboxyethyl)-AMP + GDP + phosphate + 2 H(+). It participates in purine metabolism; AMP biosynthesis via de novo pathway; AMP from IMP: step 1/2. In terms of biological role, plays an important role in the de novo pathway of purine nucleotide biosynthesis. Catalyzes the first committed step in the biosynthesis of AMP from IMP. This is Adenylosuccinate synthetase from Paraburkholderia phymatum (strain DSM 17167 / CIP 108236 / LMG 21445 / STM815) (Burkholderia phymatum).